Here is a 159-residue protein sequence, read N- to C-terminus: Neuroglobin-2 (159 aa).

A Globin domain is found at 3 to 151 (KLTEKDKELI…VVAAMSRGWA (149 aa)). Residues His-66 and His-98 each contribute to the heme b site.

It belongs to the globin family. As to quaternary structure, monomer. Homodimers and homotetramers. Mainly monomeric but also detected as part of homodimers and homotetramers.

Its subcellular location is the cytoplasm. It is found in the cytosol. The protein resides in the mitochondrion matrix. It catalyses the reaction Fe(III)-heme b-[protein] + nitric oxide + H2O = Fe(II)-heme b-[protein] + nitrite + 2 H(+). In terms of biological role, monomeric globin with a bis-histidyl six-coordinate heme-iron atom through which it can bind dioxygen, carbon monoxide and nitric oxide. Could help transport oxygen and increase its availability to the metabolically active neuronal tissues, though its low quantity in tissues as well as its high affinity for dioxygen, which may limit its oxygen-releasing ability, argue against it. The ferrous/deoxygenated form exhibits a nitrite reductase activity and it could produce nitric oxide which in turn inhibits cellular respiration in response to hypoxia. In its ferrous/deoxygenated state, it may also exhibit GDI (Guanine nucleotide Dissociation Inhibitor) activity toward heterotrimeric G-alpha proteins, thereby regulating signal transduction to facilitate neuroprotective responses in the wake of hypoxia and associated oxidative stress. This chain is Neuroglobin-2 (ngb2), found in Oncorhynchus mykiss (Rainbow trout).